The primary structure comprises 503 residues: Alpha-1-syntrophin (503 aa).

PH domains follow at residues 6 to 263 (RAPR…AQIG) and 287 to 399 (DIKQ…DGCH). The segment at 40 to 68 (LTVSPADGEPGPEPEPAQLNGAAEPGAAP) is disordered. Residues 81–164 (RVTVRKADAG…EVVLEVKYMK (84 aa)) enclose the PDZ domain. A phosphoserine mark is found at Ser-95, Ser-178, Ser-183, Ser-187, and Ser-194. The tract at residues 177–203 (TSVGWDSPPASPLQRQPSSPGPQPRNL) is disordered. Positions 447 to 503 (PFEKLQMSSDDGTSLLFLDFGGAEGEIQLDLHSCPKTMVFIIHSFLSAKVTRLGLLA) constitute an SU domain. Residues 481–503 (PKTMVFIIHSFLSAKVTRLGLLA) form a calmodulin-binding region.

This sequence belongs to the syntrophin family. As to quaternary structure, monomer and homodimer. Interacts with MAPK12, TGFA, GA and F-actin. Interacts with the other members of the syntrophin family: SNTB1 and SNTB2; with dystrophin protein DMD and related proteins DTNA and UTRN; SGCG and SGCA of the dystrophin glycoprotein complex; NOS1; GRB2; calmodulin and the sodium channel proteins SCN4A and SCN5A. Interacts with MYOC; regulates muscle hypertrophy. Interacts with DTNB. Post-translationally, phosphorylated by CaM-kinase II. Phosphorylation may inhibit the interaction with DMD. As to expression, high expression in skeletal muscle. Expressed at intermediate level in heart, kidney and brain, and at low level in intestine, liver, lung and testis.

It is found in the cell membrane. It localises to the sarcolemma. Its subcellular location is the cell junction. The protein localises to the cytoplasm. The protein resides in the cytoskeleton. In terms of biological role, adapter protein that binds to and probably organizes the subcellular localization of a variety of membrane proteins. May link various receptors to the actin cytoskeleton and the extracellular matrix via the dystrophin glycoprotein complex. Plays an important role in synapse formation and in the organization of UTRN and acetylcholine receptors at the neuromuscular synapse. Binds to phosphatidylinositol 4,5-bisphosphate. This Mus musculus (Mouse) protein is Alpha-1-syntrophin (Snta1).